We begin with the raw amino-acid sequence, 395 residues long: S-adenosylmethionine synthase (395 aa).

His12 contacts ATP. Asp14 is a Mg(2+) binding site. Glu40 lines the K(+) pocket. Residues Glu53 and Gln96 each coordinate L-methionine. The segment at Gln96–Phe106 is flexible loop. ATP-binding positions include Asp174 to Lys176, Arg242 to Phe243, Asp251, Arg257 to Lys258, Ala274, and Lys278. An L-methionine-binding site is contributed by Asp251. Residue Lys282 coordinates L-methionine.

Belongs to the AdoMet synthase family. As to quaternary structure, homotetramer; dimer of dimers. Mg(2+) serves as cofactor. Requires K(+) as cofactor.

The protein localises to the cytoplasm. The catalysed reaction is L-methionine + ATP + H2O = S-adenosyl-L-methionine + phosphate + diphosphate. It participates in amino-acid biosynthesis; S-adenosyl-L-methionine biosynthesis; S-adenosyl-L-methionine from L-methionine: step 1/1. In terms of biological role, catalyzes the formation of S-adenosylmethionine (AdoMet) from methionine and ATP. The overall synthetic reaction is composed of two sequential steps, AdoMet formation and the subsequent tripolyphosphate hydrolysis which occurs prior to release of AdoMet from the enzyme. The chain is S-adenosylmethionine synthase from Tropheryma whipplei (strain TW08/27) (Whipple's bacillus).